A 473-amino-acid polypeptide reads, in one-letter code: Sulfate adenylyltransferase subunit 1 (473 aa).

The tr-type G domain occupies 19 to 238; the sequence is KTLLKFLTCG…IKIKNSISSE (220 aa). Residues 28-35 form a G1 region; the sequence is GSVDDGKS. GTP is bound at residue 28–35; it reads GSVDDGKS. The tract at residues 86 to 90 is G2; that stretch reads GITID. The segment at 107–110 is G3; the sequence is DTPG. GTP contacts are provided by residues 107 to 111 and 162 to 165; these read DTPGH and NKMD. The tract at residues 162–165 is G4; the sequence is NKMD. The tract at residues 200–202 is G5; sequence SAL.

It belongs to the TRAFAC class translation factor GTPase superfamily. Classic translation factor GTPase family. CysN/NodQ subfamily. In terms of assembly, heterodimer composed of CysD, the smaller subunit, and CysN.

The enzyme catalyses sulfate + ATP + H(+) = adenosine 5'-phosphosulfate + diphosphate. It functions in the pathway sulfur metabolism; hydrogen sulfide biosynthesis; sulfite from sulfate: step 1/3. Its function is as follows. With CysD forms the ATP sulfurylase (ATPS) that catalyzes the adenylation of sulfate producing adenosine 5'-phosphosulfate (APS) and diphosphate, the first enzymatic step in sulfur assimilation pathway. APS synthesis involves the formation of a high-energy phosphoric-sulfuric acid anhydride bond driven by GTP hydrolysis by CysN coupled to ATP hydrolysis by CysD. The protein is Sulfate adenylyltransferase subunit 1 of Buchnera aphidicola subsp. Acyrthosiphon pisum (strain Tuc7).